Reading from the N-terminus, the 280-residue chain is 2-dehydro-3-deoxyphosphooctonate aldolase (280 aa).

It belongs to the KdsA family.

Its subcellular location is the cytoplasm. The catalysed reaction is D-arabinose 5-phosphate + phosphoenolpyruvate + H2O = 3-deoxy-alpha-D-manno-2-octulosonate-8-phosphate + phosphate. It functions in the pathway carbohydrate biosynthesis; 3-deoxy-D-manno-octulosonate biosynthesis; 3-deoxy-D-manno-octulosonate from D-ribulose 5-phosphate: step 2/3. The protein operates within bacterial outer membrane biogenesis; lipopolysaccharide biosynthesis. The polypeptide is 2-dehydro-3-deoxyphosphooctonate aldolase (Desulfotalea psychrophila (strain LSv54 / DSM 12343)).